The primary structure comprises 111 residues: T cell receptor beta variable 20-1 (111 aa).

The first 15 residues, 1-15, serve as a signal peptide directing secretion; it reads MLLLLLLLGPGSGLG. Residues 16-111 form the Ig-like domain; that stretch reads AVVSQHPSRV…DSSFYICSAR (96 aa). A disulfide bridge connects residues C37 and C108.

Alpha-beta TR is a heterodimer composed of an alpha and beta chain; disulfide-linked. The alpha-beta TR is associated with the transmembrane signaling CD3 coreceptor proteins to form the TR-CD3 (TcR or TCR). The assembly of alpha-beta TR heterodimers with CD3 occurs in the endoplasmic reticulum where a single alpha-beta TR heterodimer associates with one CD3D-CD3E heterodimer, one CD3G-CD3E heterodimer and one CD247 homodimer forming a stable octameric structure. CD3D-CD3E and CD3G-CD3E heterodimers preferentially associate with TR alpha and TR beta chains, respectively. The association of the CD247 homodimer is the last step of TcR assembly in the endoplasmic reticulum and is required for transport to the cell surface.

The protein localises to the cell membrane. V region of the variable domain of T cell receptor (TR) beta chain that participates in the antigen recognition. Alpha-beta T cell receptors are antigen specific receptors which are essential to the immune response and are present on the cell surface of T lymphocytes. Recognize peptide-major histocompatibility (MH) (pMH) complexes that are displayed by antigen presenting cells (APC), a prerequisite for efficient T cell adaptive immunity against pathogens. Binding of alpha-beta TR to pMH complex initiates TR-CD3 clustering on the cell surface and intracellular activation of LCK that phosphorylates the ITAM motifs of CD3G, CD3D, CD3E and CD247 enabling the recruitment of ZAP70. In turn ZAP70 phosphorylates LAT, which recruits numerous signaling molecules to form the LAT signalosome. The LAT signalosome propagates signal branching to three major signaling pathways, the calcium, the mitogen-activated protein kinase (MAPK) kinase and the nuclear factor NF-kappa-B (NF-kB) pathways, leading to the mobilization of transcription factors that are critical for gene expression and essential for T cell growth and differentiation. The T cell repertoire is generated in the thymus, by V-(D)-J rearrangement. This repertoire is then shaped by intrathymic selection events to generate a peripheral T cell pool of self-MH restricted, non-autoaggressive T cells. Post-thymic interaction of alpha-beta TR with the pMH complexes shapes TR structural and functional avidity. This chain is T cell receptor beta variable 20-1, found in Homo sapiens (Human).